A 54-amino-acid polypeptide reads, in one-letter code: uncharacterized protein (54 aa).

An N-terminal signal peptide occupies residues Met1–Trp13.

It is found in the secreted. This is an uncharacterized protein from Saccharomyces cerevisiae (strain ATCC 204508 / S288c) (Baker's yeast).